The primary structure comprises 445 residues: Trigger factor (445 aa).

The PPIase FKBP-type domain maps to 166–251 (GDVVVVDFVG…AKALKRPVDV (86 aa)).

The protein belongs to the FKBP-type PPIase family. Tig subfamily.

Its subcellular location is the cytoplasm. The enzyme catalyses [protein]-peptidylproline (omega=180) = [protein]-peptidylproline (omega=0). Functionally, involved in protein export. Acts as a chaperone by maintaining the newly synthesized protein in an open conformation. Functions as a peptidyl-prolyl cis-trans isomerase. The protein is Trigger factor of Gluconacetobacter diazotrophicus (strain ATCC 49037 / DSM 5601 / CCUG 37298 / CIP 103539 / LMG 7603 / PAl5).